A 262-amino-acid chain; its full sequence is 5-methyltetrahydrofolate:corrinoid/iron-sulfur protein co-methyltransferase (262 aa).

The 246-residue stretch at Met1–Leu246 folds into the Pterin-binding domain. Positions 96 and 160 each coordinate (6S)-5-methyl-5,6,7,8-tetrahydrofolate. Position 184 (Lys184) interacts with Ca(2+). (6S)-5-methyl-5,6,7,8-tetrahydrofolate is bound by residues Asn199, Gln202, and Arg207. Position 202 to 203 (Gln202 to Asn203) interacts with methylcob(III)alamin. Residues Gly222 and Asp224 each coordinate Ca(2+).

The protein belongs to the vitamin-B12 dependent methionine synthase family. As to quaternary structure, heterohexamer composed of 2 subunits of AcsC, 2 subunits of AcsD and 2 subunits of AcsE. Ca(2+) is required as a cofactor.

The enzyme catalyses methyl-Co(III)-[corrinoid Fe-S protein] + (6S)-5,6,7,8-tetrahydrofolate = Co(I)-[corrinoid Fe-S protein] + (6S)-5-methyl-5,6,7,8-tetrahydrofolate + H(+). Functionally, methyltransferase that mediates the transfer of a N5-methyl group of (6S)-methyltetrahydrofolate to the 5-methoxybenzimidazolylcobamide cofactor of a corrinoid/Fe-S protein (AcsC/AcsD) in the anaerobic acetyl-CoA pathway (Wood-Ljungdahl pathway) of carbon monoxide and carbon dioxide fixation. This Moorella thermoacetica (Clostridium thermoaceticum) protein is 5-methyltetrahydrofolate:corrinoid/iron-sulfur protein co-methyltransferase (acsE).